The chain runs to 678 residues: Glycine--tRNA ligase beta subunit (678 aa).

The protein belongs to the class-II aminoacyl-tRNA synthetase family. As to quaternary structure, tetramer of two alpha and two beta subunits.

It localises to the cytoplasm. The catalysed reaction is tRNA(Gly) + glycine + ATP = glycyl-tRNA(Gly) + AMP + diphosphate. The polypeptide is Glycine--tRNA ligase beta subunit (Streptococcus pneumoniae (strain P1031)).